Here is a 92-residue protein sequence, read N- to C-terminus: Small ribosomal subunit protein bS20 (92 aa).

It belongs to the bacterial ribosomal protein bS20 family.

Its function is as follows. Binds directly to 16S ribosomal RNA. This Persephonella marina (strain DSM 14350 / EX-H1) protein is Small ribosomal subunit protein bS20.